We begin with the raw amino-acid sequence, 359 residues long: MEKIFQNVEIKPFLIDFSNPFIKNAAKRLFQLEEQLPLVPVNVVMDFKGINRAAVHGLSRVLQDEIPNYMLDIKPGGYKIEDSTDLFMTEQFIRNRINFIPIYAKNETLVFALRSLNNSCEVKTIYSRDLIQVAGPKLKYPIFNPTFEIGFLQPGKSLIIEDIYIKKGIGRKHAAFNLAVKTHFSHLDIEQYPTDKKEYMALSGYKQSSMTSDPRHHRLGLCFPAVPLPHINQAVRTYLKNACRVIIGRIQSIQKIYENFEEPQPELVLFSMDEEKTKAIITIKDETHTIGNLLKTYIYEMIPDISFVGYQCVPHKQEMVLTIIHKASQEDLITLLEKSIQNIIQTFQILEKNVDELIA.

This sequence in the N-terminal section; belongs to the archaeal RpoD/eukaryotic RPB3 RNA polymerase subunit family. It in the C-terminal section; belongs to the archaeal RpoL/eukaryotic RPB11/RPC19 RNA polymerase subunit family. In terms of assembly, part of the viral DNA-directed RNA polymerase that consists of 8 polII-like subunits (RPB1, RPB2, RPB3, RPB5, RPB6, RPB7, RPB9, RPB10), a capping enzyme and a termination factor.

The protein resides in the host cytoplasm. It localises to the virion. In terms of biological role, component of the DNA-directed RNA polymerase (RNAP) that catalyzes the transcription in the cytoplasm of viral DNA into RNA using the four ribonucleoside triphosphates as substrates. The polypeptide is DNA-directed RNA polymerase RPB3-11 homolog (Ornithodoros (relapsing fever ticks)).